The sequence spans 382 residues: Per os infectivity factor 2 (382 aa).

Forms the PIF complex together with PIF1 and PIF3. The complex also interacts with per os infectivity factor PIF0.

Functionally, per os infectivity factor that mediates the specific binding of occluded virions (ODV) to the host midgut target cells. The sequence is that of Per os infectivity factor 2 from Autographa californica nuclear polyhedrosis virus (AcMNPV).